The sequence spans 207 residues: Small ribosomal subunit protein uS2 (207 aa).

It belongs to the universal ribosomal protein uS2 family.

The sequence is that of Small ribosomal subunit protein uS2 from Pyrobaculum islandicum (strain DSM 4184 / JCM 9189 / GEO3).